The primary structure comprises 76 residues: VpAmp1.0 (76 aa).

The N-terminal stretch at 1–22 is a signal peptide; it reads MKLINLVPVFFVLIIVVDYCHS. Ile41 is modified (isoleucine amide). Positions 42 to 76 are excised as a propeptide; sequence GKRSVESQRYVDLNRRDLEQDLQELQDFLDQISEH.

It belongs to the non-disulfide-bridged peptide (NDBP) superfamily. Short antimicrobial peptide (group 4) family. In terms of tissue distribution, expressed by the venom gland.

The protein localises to the secreted. Its subcellular location is the target cell membrane. In terms of biological role, antimicrobial peptide with potent activity against Gram-positive bacteria S.aureus (MIC=2.5 uM) and S.agalactiaea (MIC=2.5 uM), and Gram-negative bacteria E.coli (MIC=24 uM) and P.aeruginosa (MIC=2.5 uM), as well as against yeasts Candida albicans (MIC=6.25 uM) and C.glabrata (MIC&gt;50 uM). Also elicits high hemolysis on human erythrocytes (HC(50)=9.2 uM). This Mesomexovis punctatus (Scorpion) protein is VpAmp1.0.